Here is a 632-residue protein sequence, read N- to C-terminus: uncharacterized protein (632 aa).

4 consecutive transmembrane segments (helical) span residues Leu-255–Val-275, Ile-506–Ile-526, Met-566–Phe-586, and Ile-603–Phe-623.

The protein localises to the cell membrane. This is an uncharacterized protein from Mycoplasma pneumoniae (strain ATCC 29342 / M129 / Subtype 1) (Mycoplasmoides pneumoniae).